Here is a 350-residue protein sequence, read N- to C-terminus: MPVLHNRISNDALKAKMLAESEPRTTISFYKYFHIADPKVTRDALYQLFTALNVFGRVYLAHEGINAQISVPASNVETFRAQLYDFDPALEGLRLNIALDDDGKSFWVLRMKVRDRIVADGIDDPHFDASNVGEYLQAAEVNAMLDDPDALFIDMRNHYEYEVGHFENALEIPADTFREQLPKAVEMMQAHKDKKIVMYCTGGIRCEKASAWMKHNGFNKVWHIEGGIIEYARKAREQGLPVRFIGKNFVFDERMGERISDEIIAHCHQCGAPCDSHTNCKNDGCHLLFIQCPVCAEKYKGCCSEICCEESALPPEEQRRRRAGRENGNKIFNKSRGRLNTTLGIPDPTE.

A Rhodanese domain is found at 146–240; that stretch reads DDPDALFIDM…YARKAREQGL (95 aa). Cys200 serves as the catalytic Cysteine persulfide intermediate.

This sequence belongs to the TrhO family.

The enzyme catalyses uridine(34) in tRNA + AH2 + O2 = 5-hydroxyuridine(34) in tRNA + A + H2O. Catalyzes oxygen-dependent 5-hydroxyuridine (ho5U) modification at position 34 in tRNAs, the first step in 5-carboxymethoxyuridine (cmo5U) biosynthesis. May be part of an alternate pathway, which is able to bypass cmo5U biogenesis in a subset of tRNAs under aerobic conditions. The chain is tRNA uridine(34) hydroxylase from Escherichia coli (strain SE11).